Reading from the N-terminus, the 73-residue chain is MSMSHIYTVVRCPRCGKPVPWNETQRFRPFCSERCRLIDLGSWANEDYAIPGEPIDPAEPSEDRNGAEGPPTD.

4 residues coordinate Zn(2+): Cys-12, Cys-15, Cys-31, and Cys-35. Residues 47-73 (DYAIPGEPIDPAEPSEDRNGAEGPPTD) are disordered.

It belongs to the DNA gyrase inhibitor YacG family. In terms of assembly, interacts with GyrB. Zn(2+) serves as cofactor.

Its function is as follows. Inhibits all the catalytic activities of DNA gyrase by preventing its interaction with DNA. Acts by binding directly to the C-terminal domain of GyrB, which probably disrupts DNA binding by the gyrase. This Methylococcus capsulatus (strain ATCC 33009 / NCIMB 11132 / Bath) protein is DNA gyrase inhibitor YacG.